We begin with the raw amino-acid sequence, 133 residues long: Type VI secretion amidase effector 2 protein (133 aa).

Catalysis depends on residues Cys23 and His73.

It belongs to the cell wall amidase Dae2/Tae2-like family.

The protein localises to the host periplasm. It localises to the secreted. The protein operates within cell wall degradation; peptidoglycan degradation. In terms of biological role, toxic component of a contact-dependent interbacterial competition system (also called effector-immunity systems). Secreted by the SPI-6 type VI secretion system, probably into the periplasm of bacterial target cells. A cell wall amidase with specificity toward the D-meso-DAP-D-alanine bond (D-meso-diaminopimelic-D-alanine) found in peptidoglycan of Gram-negative bacteria. Toxicity is counteracted by a cognate immunity protein Tai2 (t2585), but not immunity proteins associated with a similar endopeptidase in other bacteria. In vitro degrades peptidoglycans from Gram-negative but not Gram-positive bacteria. The polypeptide is Type VI secretion amidase effector 2 protein (Salmonella typhi).